Reading from the N-terminus, the 275-residue chain is 5'-nucleotidase SurE (275 aa).

Positions 12, 13, 44, and 102 each coordinate a divalent metal cation.

It belongs to the SurE nucleotidase family. A divalent metal cation serves as cofactor.

It localises to the cytoplasm. The enzyme catalyses a ribonucleoside 5'-phosphate + H2O = a ribonucleoside + phosphate. Nucleotidase that shows phosphatase activity on nucleoside 5'-monophosphates. This chain is 5'-nucleotidase SurE, found in Synechococcus sp. (strain RCC307).